The following is a 115-amino-acid chain: MRIKVGETVAILAGKDRFVTDESGKKMIKTGKVLKVFAKTQKIIVEGVNIKTKHQPPSQNEEKGAIVKQEAPIHVSNVALVDPQTQTSTKVGIRIQSGKKVRYAKKSNQTLDEKN.

The protein belongs to the universal ribosomal protein uL24 family. As to quaternary structure, part of the 50S ribosomal subunit.

Functionally, one of two assembly initiator proteins, it binds directly to the 5'-end of the 23S rRNA, where it nucleates assembly of the 50S subunit. Its function is as follows. One of the proteins that surrounds the polypeptide exit tunnel on the outside of the subunit. In Aster yellows witches'-broom phytoplasma (strain AYWB), this protein is Large ribosomal subunit protein uL24.